We begin with the raw amino-acid sequence, 61 residues long: Large ribosomal subunit protein eL24 (61 aa).

The Zn(2+) site is built by C7, C10, C33, and C37. Residues 7 to 37 (CSFCGGDIPPATGMMHVRNDGTILWFCSNKC) form a C4-type zinc finger.

Belongs to the eukaryotic ribosomal protein eL24 family. In terms of assembly, part of the 50S ribosomal subunit. Forms a cluster with proteins L3 and L14. The cofactor is Zn(2+).

Its function is as follows. Binds to the 23S rRNA. In Metallosphaera sedula (strain ATCC 51363 / DSM 5348 / JCM 9185 / NBRC 15509 / TH2), this protein is Large ribosomal subunit protein eL24.